The chain runs to 154 residues: Transcriptional repressor NrdR (154 aa).

A zinc finger lies at 3 to 34 (CPFCGNENTRVIDTRAAEDGFAIKRRRECENC). In terms of domain architecture, ATP-cone spans 49-139 (LIVVKKDGSK…VYRQFKDVNS (91 aa)).

The protein belongs to the NrdR family. Zn(2+) serves as cofactor.

Negatively regulates transcription of bacterial ribonucleotide reductase nrd genes and operons by binding to NrdR-boxes. The protein is Transcriptional repressor NrdR of Carboxydothermus hydrogenoformans (strain ATCC BAA-161 / DSM 6008 / Z-2901).